The sequence spans 484 residues: MSTTLLSPFYDIDFLCKTEKSLANLNLNNMLDKKAVGTPVAAAPSSSFTPGFLRRHSASNLHALAHPVPSPGSCSPKFPGAPNGGGSSCGPAGGGGLASYGQLKEPSGGSGTALVTKESKFRDRSFSENGERSQHLLHLQQQQKGGSGSQINSTRYKTELCRPFEESGTCKYGEKCQFAHGFHELRSLTRHPKYKTELCRTFHTIGFCPYGPRCHFIHNADERRPAPSGGGGASGDLRAFGARDALHLGFAREPRPKLHHSLSFSGFPSGHHQPPGGLESPLLLDSPTSRTPPPPSSSASSCSSSASSCSSASAASTPSGAPTCCATAAAAALLYGPGGAEDLLSPGAPCASCSSSGANNAFAFGPELSSLITPLAIQTHNFAAAAAAAYYRNQQQGLTGPAPPPAQPPAAPAPPSPPFGFQLPRRLSESPVFDAPPSPPDSLSDRDSYLSGSLSSGSLSGSESPSLDPGRRLPIFSRLSISDD.

2 positions are modified to phosphoserine: Ser-57 and Ser-127. Residues Tyr-100–Asn-152 form a disordered region. Basic and acidic residues predominate over residues Lys-117–Gln-134. The RNA-binding motif lies at Arg-155–Leu-160. 2 consecutive C3H1-type zinc fingers follow at residues Arg-155 to His-183 and Lys-193 to Asp-221. Residues Tyr-172–Arg-213 are RNA-binding. 2 disordered regions span residues Ser-261–Ser-304 and Gln-395–Asp-484. A compositionally biased stretch (pro residues) spans Pro-401–Pro-418. Low complexity predominate over residues Tyr-449 to Asp-468. A phosphoserine; by RPS6KA1 mark is found at Ser-480 and Ser-482.

In terms of assembly, associates with the cytoplasmic CCR4-NOT deadenylase to trigger ARE-containing mRNA deadenylation and decay processes. Interacts with CNOT7; this interaction is inhibited in response to phorbol 12-myristate 13-acetate (PMA) treatment in a p38 MAPK-dependent manner. Interacts with CNOT6L. Phosphorylated by RPS6KA1 at Ser-480 and Ser-482 upon phorbol 12-myristate 13-acetate (PMA) treatment; this phosphorylation results in dissociation of the CCR4-NOT-deadenylase complex and induces p38 MAPK-mediated stabilization of the low-density lipoprotein (LDL) receptor (LDLR) mRNA. Phosphorylation occurs during early preadipocyte differentiation. As to expression, expressed in preadipocytes and adipocytes (at protein level). Expressed at highest level in lymphoid tissues such as thymus, spleen, lung, uterus, ovary, small and large intestine, mammary gland, fat and bone marrow. Expressed at intermediate level in kidney, heart, adrenal, eye and fetal liver. Weakly expressed in brain, skeletal muscle and liver. Expressed through B lymphocyte development. Expressed in superior cervical ganglion (SCG) and dorsal root ganglion (DRG). Expressed in embryonic stem cells (ESCs). Expressed in oocytes.

It is found in the nucleus. The protein localises to the cytoplasm. Its function is as follows. Zinc-finger RNA-binding protein that destabilizes several cytoplasmic AU-rich element (ARE)-containing mRNA transcripts by promoting their poly(A) tail removal or deadenylation, and hence provide a mechanism for attenuating protein synthesis. Acts as a 3'-untranslated region (UTR) ARE mRNA-binding adapter protein to communicate signaling events to the mRNA decay machinery. Functions by recruiting the CCR4-NOT deadenylase complex and probably other components of the cytoplasmic RNA decay machinery to the bound ARE-containing mRNAs, and hence promotes ARE-mediated mRNA deadenylation and decay processes. Binds to 3'-UTR ARE of numerous mRNAs. Promotes ARE-containing mRNA decay of the low-density lipoprotein (LDL) receptor (LDLR) mRNA in response to phorbol 12-myristate 13-acetate (PMA) treatment in a p38 MAPK-dependent manner. Positively regulates early adipogenesis by promoting ARE-mediated mRNA decay of immediate early genes (IEGs). Plays a role in mature peripheral neuron integrity by promoting ARE-containing mRNA decay of the transcriptional repressor REST mRNA. Plays a role in ovulation and oocyte meiotic maturation by promoting ARE-mediated mRNA decay of the luteinizing hormone receptor LHCGR mRNA. Acts as a negative regulator of erythroid cell differentiation: promotes glucocorticoid-induced self-renewal of erythroid cells by binding mRNAs that are induced or highly expressed during terminal erythroid differentiation and promotes their degradation, preventing erythroid cell differentiation. In association with ZFP36L1 maintains quiescence on developing B lymphocytes by promoting ARE-mediated decay of several mRNAs encoding cell cycle regulators that help B cells progress through the cell cycle, and hence ensuring accurate variable-diversity-joining (VDJ) recombination process and functional immune cell formation. Together with ZFP36L1 is also necessary for thymocyte development and prevention of T-cell acute lymphoblastic leukemia (T-ALL) transformation by promoting ARE-mediated mRNA decay of the oncogenic transcription factor NOTCH1 mRNA. The sequence is that of mRNA decay activator protein ZFP36L2 from Mus musculus (Mouse).